The sequence spans 340 residues: Phosphate carrier protein, mitochondrial (340 aa).

The transit peptide at 1–27 (MSVFSQLAESSKQNPFSLPVRSGNCAS) directs the protein to the mitochondrion. Solcar repeat units lie at residues 41–125 (KYYA…FKNV), 138–222 (YRTS…TVEA), and 239–317 (EQLV…VKVA). The next 6 helical transmembrane spans lie at 47-67 (ALGGVLSCGITHTAIVPLDLV), 95-114 (RALVKGWAPTLLGYSAQGLG), 141-161 (SLYLAASASAEFFADILLAPM), 200-220 (PLWMRQIPYTMMKFACFEKTV), 241-261 (LVVTFVAGYIAGVFCAIVSHP), and 297-317 (IIMIGTLTALQWFIYDSVKVA).

It belongs to the mitochondrial carrier (TC 2.A.29) family.

It localises to the mitochondrion inner membrane. In terms of biological role, transport of phosphate groups from the cytosol to the mitochondrial matrix. In Caenorhabditis elegans, this protein is Phosphate carrier protein, mitochondrial.